The following is a 201-amino-acid chain: MEELTPRQNEVLRFLEGYLTQYGYPPTMRDIAAHLRISGTLGVSKHLTALERKGYIRRDPGNSRGISLVGHGSKSASLPIAGVVRAGMLQPAIEDIEGYLAIDQAQLKGGKFFLRVKGDSMVNAAILDGDLALIRPQPTAENNDIVVAMVDGEATLKAFYRERGQIRLQPRNPNMEPIIIREGEGEVAIVGKVVGIFRTLE.

Positions 28 to 48 (MRDIAAHLRISGTLGVSKHLT) form a DNA-binding region, H-T-H motif. Active-site for autocatalytic cleavage activity residues include Ser120 and Lys157.

The protein belongs to the peptidase S24 family. Homodimer.

The enzyme catalyses Hydrolysis of Ala-|-Gly bond in repressor LexA.. In terms of biological role, represses a number of genes involved in the response to DNA damage (SOS response), including recA and lexA. In the presence of single-stranded DNA, RecA interacts with LexA causing an autocatalytic cleavage which disrupts the DNA-binding part of LexA, leading to derepression of the SOS regulon and eventually DNA repair. The polypeptide is LexA repressor (Geobacter metallireducens (strain ATCC 53774 / DSM 7210 / GS-15)).